Consider the following 189-residue polypeptide: MWVYEKKLQYPVKVSTCNPTLAKYLIEQYGGADGELAAALRYLNQRYTIPDKVIGLLTDIGTEEFAHLEMIATMVYKLTKDATPEQLREAGLGDHYVNHDSALFYHNAAGVPFTASYIQAKGDPIADLYEDIAAEEKARATYQWLIDISDDPDLNDSLRFLREREIVHSMRFREAVEILKEERDKKKIF.

Belongs to the manganese catalase family.

Its function is as follows. The cotJ operon proteins affect spore coat composition. They are either required for the normal formation of the inner layers of the coat or are themselves structural components of the coat. This is Protein CotJC (cotJC) from Bacillus subtilis (strain 168).